The chain runs to 108 residues: Phosphoribosyl-ATP pyrophosphatase (108 aa).

This sequence belongs to the PRA-PH family.

It localises to the cytoplasm. It catalyses the reaction 1-(5-phospho-beta-D-ribosyl)-ATP + H2O = 1-(5-phospho-beta-D-ribosyl)-5'-AMP + diphosphate + H(+). It participates in amino-acid biosynthesis; L-histidine biosynthesis; L-histidine from 5-phospho-alpha-D-ribose 1-diphosphate: step 2/9. This is Phosphoribosyl-ATP pyrophosphatase from Thiobacillus denitrificans (strain ATCC 25259 / T1).